The following is a 212-amino-acid chain: Octanoyltransferase (212 aa).

A BPL/LPL catalytic domain is found at 34-208 (GQRQDTLILL…AFERQFNARC (175 aa)). Residues 72–79 (RGGQVTYH), 139–141 (SIG), and 152–154 (GLS) contribute to the substrate site. The Acyl-thioester intermediate role is filled by C170.

This sequence belongs to the LipB family.

The protein resides in the cytoplasm. It carries out the reaction octanoyl-[ACP] + L-lysyl-[protein] = N(6)-octanoyl-L-lysyl-[protein] + holo-[ACP] + H(+). It functions in the pathway protein modification; protein lipoylation via endogenous pathway; protein N(6)-(lipoyl)lysine from octanoyl-[acyl-carrier-protein]: step 1/2. Its function is as follows. Catalyzes the transfer of endogenously produced octanoic acid from octanoyl-acyl-carrier-protein onto the lipoyl domains of lipoate-dependent enzymes. Lipoyl-ACP can also act as a substrate although octanoyl-ACP is likely to be the physiological substrate. The polypeptide is Octanoyltransferase (Magnetococcus marinus (strain ATCC BAA-1437 / JCM 17883 / MC-1)).